The chain runs to 436 residues: uncharacterized protein (436 aa).

This is an uncharacterized protein from Treponema pallidum (strain Nichols).